The sequence spans 531 residues: NADH-quinone oxidoreductase subunit N (531 aa).

14 helical membrane-spanning segments follow: residues 8 to 28, 41 to 61, 81 to 101, 146 to 166, 172 to 192, 208 to 228, 250 to 270, 282 to 302, 318 to 338, 350 to 370, 372 to 392, 418 to 438, 453 to 473, and 500 to 520; these read VEYF…AGVL, AQVT…IVVA, ATLF…VFMA, GATQ…MMVF, LLTM…MCGL, FLLG…LYGA, ALAG…AVPF, PTPI…GALL, PVLW…AVNQ, VAHV…GLSA, LFYL…VGLV, IVGV…LTSG, GAVP…YFYV, and AAIA…QPVL.

The protein belongs to the complex I subunit 2 family. As to quaternary structure, NDH-1 is composed of 14 different subunits. Subunits NuoA, H, J, K, L, M, N constitute the membrane sector of the complex.

It localises to the cell membrane. The catalysed reaction is a quinone + NADH + 5 H(+)(in) = a quinol + NAD(+) + 4 H(+)(out). Its function is as follows. NDH-1 shuttles electrons from NADH, via FMN and iron-sulfur (Fe-S) centers, to quinones in the respiratory chain. The immediate electron acceptor for the enzyme in this species is believed to be a menaquinone. Couples the redox reaction to proton translocation (for every two electrons transferred, four hydrogen ions are translocated across the cytoplasmic membrane), and thus conserves the redox energy in a proton gradient. The protein is NADH-quinone oxidoreductase subunit N of Mycobacterium tuberculosis (strain CDC 1551 / Oshkosh).